Consider the following 189-residue polypeptide: Inosine triphosphate pyrophosphatase (189 aa).

An ITP-binding site is contributed by 8-13; it reads TGNANK. Glu-39 contributes to the Mg(2+) binding site. ITP contacts are provided by residues Lys-51, 67–68, Lys-84, 143–146, Lys-167, and 172–173; these read DT, FGWD, and HR.

The protein belongs to the HAM1 NTPase family. Homodimer. Mg(2+) is required as a cofactor. The cofactor is Mn(2+).

Its subcellular location is the cytoplasm. It localises to the nucleus. The catalysed reaction is ITP + H2O = IMP + diphosphate + H(+). The enzyme catalyses dITP + H2O = dIMP + diphosphate + H(+). It carries out the reaction XTP + H2O = XMP + diphosphate + H(+). Functionally, pyrophosphatase that hydrolyzes non-canonical purine nucleotides such as inosine triphosphate (ITP), deoxyinosine triphosphate (dITP) or xanthosine 5'-triphosphate (XTP) to their respective monophosphate derivatives. The enzyme does not distinguish between the deoxy- and ribose forms. Probably excludes non-canonical purines from RNA and DNA precursor pools, thus preventing their incorporation into RNA and DNA and avoiding chromosomal lesions. This is Inosine triphosphate pyrophosphatase from Cryptococcus neoformans var. neoformans serotype D (strain JEC21 / ATCC MYA-565) (Filobasidiella neoformans).